The following is a 394-amino-acid chain: Potassium channel subfamily K member 18 (394 aa).

Over 1 to 31 (MEAEEPPEARRCCPEALGKARGCCPEALGKL) the chain is Cytoplasmic. Residues 32 to 52 (LPGLCFLCCLVTYALVGAALF) traverse the membrane as a helical segment. Asparagine 83 is a glycosylation site (N-linked (GlcNAc...) asparagine). An intramembrane region (pore-forming) is located at residues 114–140 (FLSALFFCCTVFSTVGYGHMYPVTRLG). K(+) contacts are provided by threonine 127, valine 128, glycine 129, and tyrosine 130. The segment at 127 to 132 (TVGYGH) is selectivity filter 1. A helical membrane pass occupies residues 142–162 (FLCMLYALFGIPLMFLVLTDI). The Cytoplasmic segment spans residues 163–292 (GDILATILSR…EVGQQVERLD (130 aa)). The interval 210-215 (PQIVID) is interaction with calcineurin. An interaction with YWHAH region spans residues 261–266 (RSNSCP). Residues serine 264 and serine 276 each carry the phosphoserine modification. A helical transmembrane segment spans residues 293–313 (IPLPVIALVVFAYISCAAAIL). The pore-forming intramembrane region spans 326 to 340 (FYFCFVTLTTIGFGD). The tract at residues 335-340 (TIGFGD) is selectivity filter 2. Residues 347-367 (HFFLFFSIYIIVGMEILFIAF) traverse the membrane as a helical segment. The Cytoplasmic portion of the chain corresponds to 368–394 (KLMQNRLLHTYKTLMLFVCQREVSLPW).

It belongs to the two pore domain potassium channel (TC 1.A.1.8) family. As to quaternary structure, homodimer. Heterodimer with KCNK2. Heterodimer with KCNK10. Interacts with calcineurin. Interacts with YWHAH, in a phosphorylation-dependent manner. In terms of processing, phosphorylation of Ser-264 is required for the binding of 14-3-3eta/YWHAH. Calcineurin-mediated dephosphorylation of Ser-276 enhances channel activity. N-glycosylated. Detected in brain cortex, cerebellum, dorsal root ganglion, spinal cord and testis. High expression in trigeminal ganglion (at protein level), also expressed in autonomic nervous system ganglia such as the stellate ganglion and paravertebral sympathetic ganglia. Expressed in all adult spinal cord and brain regions, with slightly higher expression in thalamus, hypothalamus, hippocampus and posterior corte (at protein level). In non-neuronal tissues, substantial expression found in lung and heart and weal expression in liver, testis, kidney, small intestine and spleen. Expressed in regulatory T cells (at protein level).

The protein resides in the cell membrane. It carries out the reaction K(+)(in) = K(+)(out). With respect to regulation, activated upon cell stimulation via Ca(2+)-mobilizing receptors, such as CHRM1/M1 muscarinic receptor and AGTR1/AT1a angiotensin receptor. Activated by volatile anesthetics, such as isoflurane and inhibited by local anesthetics such as bupivacaine and lidocaine. Inhibited by extracellular acidic pH. Inhibited by Zn(2+) ions. Inhibited by hydroxy-alpha-sanshool, an ingredient of Schezuan pepper. Inhibited by Ba(2+) ions. K(+) channel that conducts outward and inward rectifying currents at depolarized and hyperpolarized membrane potentials, respectively. The outward rectifying currents are voltage-dependent, coupled to K(+) electrochemical gradient across the membrane, whereas the inward currents can be induced in response to activation of Ca(2+)-mobilizing receptors. Homo- and heterodimerizes to form functional channels with distinct regulatory and gating properties. In trigeminal ganglia sensory neurons, the heterodimers of KCNK18/TRESK and KCNK2/TREK-1 or KCNK10/TREK-2 inhibit neuronal firing and neurogenic inflammation by stabilizing the resting membrane potential at K(+) equilibrium potential as well as by regulating the threshold of action potentials and the spike frequency. In thymocytes, conducts K(+) currents upon T cell receptor (TCR) signaling leading to sustained Ca(2+) influx and NF-kappa-B activation, FOXP3 transcription and positive selection of regulatory T cell (Treg) progenitor subsets. Appears to mediate the analgesics effects of hydroxy-alpha-sanshool, a metabolite naturally present in Schezuan pepper and other Xanthoxylum plants. This is Potassium channel subfamily K member 18 from Mus musculus (Mouse).